Here is a 160-residue protein sequence, read N- to C-terminus: Protein-export protein SecB (160 aa).

The protein belongs to the SecB family. As to quaternary structure, homotetramer, a dimer of dimers. One homotetramer interacts with 1 SecA dimer.

The protein resides in the cytoplasm. One of the proteins required for the normal export of preproteins out of the cell cytoplasm. It is a molecular chaperone that binds to a subset of precursor proteins, maintaining them in a translocation-competent state. It also specifically binds to its receptor SecA. The sequence is that of Protein-export protein SecB from Nitrosomonas eutropha (strain DSM 101675 / C91 / Nm57).